A 397-amino-acid polypeptide reads, in one-letter code: Elongation factor Tu-1 (397 aa).

In terms of domain architecture, tr-type G spans 10 to 206; that stretch reads KPHVNIGTIG…AVDENIPEPE (197 aa). Residues 19–26 form a G1 region; the sequence is GHIDHGKT. 19 to 26 lines the GTP pocket; the sequence is GHIDHGKT. Residue T26 coordinates Mg(2+). A G2 region spans residues 62–66; it reads GITIS. The interval 83–86 is G3; the sequence is DCPG. GTP contacts are provided by residues 83-87 and 138-141; these read DCPGH and NKAD. Positions 138-141 are G4; sequence NKAD. The G5 stretch occupies residues 176-178; the sequence is SAL. Position 386 is a phosphothreonine (T386).

The protein belongs to the TRAFAC class translation factor GTPase superfamily. Classic translation factor GTPase family. EF-Tu/EF-1A subfamily. Monomer. In terms of processing, phosphorylated on threonine and serine.

The protein localises to the cytoplasm. The catalysed reaction is GTP + H2O = GDP + phosphate + H(+). Functionally, GTP hydrolase that promotes the GTP-dependent binding of aminoacyl-tRNA to the A-site of ribosomes during protein biosynthesis. This Streptomyces collinus protein is Elongation factor Tu-1.